A 201-amino-acid polypeptide reads, in one-letter code: tRNA (guanine-N(7)-)-methyltransferase (201 aa).

Residues Glu-33, Glu-58, Asp-85, and Asp-106 each coordinate S-adenosyl-L-methionine. The active site involves Asp-106. Substrate contacts are provided by residues Lys-110, Asp-142, and 180 to 183; that span reads TTYE.

It belongs to the class I-like SAM-binding methyltransferase superfamily. TrmB family.

The catalysed reaction is guanosine(46) in tRNA + S-adenosyl-L-methionine = N(7)-methylguanosine(46) in tRNA + S-adenosyl-L-homocysteine. It participates in tRNA modification; N(7)-methylguanine-tRNA biosynthesis. Catalyzes the formation of N(7)-methylguanine at position 46 (m7G46) in tRNA. In Mesomycoplasma hyopneumoniae (strain 7448) (Mycoplasma hyopneumoniae), this protein is tRNA (guanine-N(7)-)-methyltransferase.